A 747-amino-acid polypeptide reads, in one-letter code: Protein tyrosine phosphatase domain-containing protein 1 (747 aa).

Residues 1–36 (MAAGVLPQNEDPYSTLVNSSGHAAHMDENSGRPAPK) are disordered. The span at 11–21 (DPYSTLVNSSG) shows a compositional bias: polar residues. The region spanning 82-253 (YSSWVTDNIL…LAPLRNIFSC (172 aa)) is the Tyrosine-protein phosphatase domain. The active-site Phosphocysteine intermediate is the Cys-190. A phosphoserine mark is found at Ser-392, Ser-394, and Ser-543. The segment at 549–570 (SSPKAQFPHGQETQDSTDLSEA) is disordered.

The protein belongs to the protein-tyrosine phosphatase family. Non-receptor class PTPDC1 subfamily.

Its function is as follows. May play roles in cilia formation and/or maintenance. The sequence is that of Protein tyrosine phosphatase domain-containing protein 1 (Ptpdc1) from Mus musculus (Mouse).